Reading from the N-terminus, the 750-residue chain is Catalase-peroxidase (750 aa).

The tryptophyl-tyrosyl-methioninium (Trp-Tyr) (with M-261) cross-link spans 112–235; sequence WHSAGTYRIG…LGAAHMGLIY (124 aa). The active-site Proton acceptor is H113. A cross-link (tryptophyl-tyrosyl-methioninium (Tyr-Met) (with W-112)) is located at residues 235–261; that stretch reads YVNPEGHNGNPDPVEAASYIRETFGRM. Position 276 (H276) interacts with heme b.

The protein belongs to the peroxidase family. Peroxidase/catalase subfamily. As to quaternary structure, homodimer or homotetramer. Requires heme b as cofactor. Post-translationally, formation of the three residue Trp-Tyr-Met cross-link is important for the catalase, but not the peroxidase activity of the enzyme.

It carries out the reaction H2O2 + AH2 = A + 2 H2O. The enzyme catalyses 2 H2O2 = O2 + 2 H2O. In terms of biological role, bifunctional enzyme with both catalase and broad-spectrum peroxidase activity. The protein is Catalase-peroxidase of Christiangramia forsetii (strain DSM 17595 / CGMCC 1.15422 / KT0803) (Gramella forsetii).